We begin with the raw amino-acid sequence, 247 residues long: MEGDCLSCMKYLMFLFNFFIFLGGACLLGVGIWVIVDPTGFREIVAANPLLFTGAYIMLAMGAMLFLLGFLGCCGAIRENKCLLLFFFMFILLIFLAELSAAILAFIFRENLTREFFTKELKKHYVRNNDTHVFSSTWNSVMITFACCGVNGPEDFEAVPPLSHLPLEETTPEACCQRKLQSREGMFVNRKACLEGDERFQNRQGCYTVILNSFETYVYLAGALAIGVLAIELFAMIFAMCLFRGIQ.

Residues 1-15 are Cytoplasmic-facing; sequence MEGDCLSCMKYLMFL. A helical transmembrane segment spans residues 16-36; that stretch reads FNFFIFLGGACLLGVGIWVIV. Topologically, residues 37-49 are extracellular; the sequence is DPTGFREIVAANP. A helical transmembrane segment spans residues 50–70; that stretch reads LLFTGAYIMLAMGAMLFLLGF. Residues 71 to 82 lie on the Cytoplasmic side of the membrane; that stretch reads LGCCGAIRENKC. The helical transmembrane segment at 83–103 threads the bilayer; the sequence is LLLFFFMFILLIFLAELSAAI. Residues 104 to 222 are Extracellular-facing; sequence LAFIFRENLT…SFETYVYLAG (119 aa). Residues Asn111 and Asn129 are each glycosylated (N-linked (GlcNAc...) asparagine). The chain crosses the membrane as a helical span at residues 223–243; it reads ALAIGVLAIELFAMIFAMCLF. Residues 244 to 247 lie on the Cytoplasmic side of the membrane; it reads RGIQ.

The protein belongs to the tetraspanin (TM4SF) family.

Its subcellular location is the membrane. Functionally, maintains CDH6 protein and promotes CDH6-dependent adherens junctions, inhibiting neural crest migration. The chain is Tetraspanin-18 from Gallus gallus (Chicken).